The sequence spans 117 residues: Putative iron-sulfur cluster insertion protein ErpA (117 aa).

Residues Cys45, Cys109, and Cys111 each contribute to the iron-sulfur cluster site.

The protein belongs to the HesB/IscA family. Homodimer. Requires iron-sulfur cluster as cofactor.

In terms of biological role, required for insertion of 4Fe-4S clusters. This Chromobacterium violaceum (strain ATCC 12472 / DSM 30191 / JCM 1249 / CCUG 213 / NBRC 12614 / NCIMB 9131 / NCTC 9757 / MK) protein is Putative iron-sulfur cluster insertion protein ErpA.